The sequence spans 288 residues: Transmembrane and coiled-coil domain-containing protein 5A (288 aa).

Positions 10–189 (KKNIISLNMD…ELETGYLERE (180 aa)) form a coiled coil. The helical transmembrane segment at 227 to 249 (SLLFSTLFFIRLLGYLIFHLSFI) threads the bilayer.

It belongs to the TMCO5 family. As to expression, only detected in testis (at protein level).

It is found in the endoplasmic reticulum membrane. It localises to the nucleus membrane. The sequence is that of Transmembrane and coiled-coil domain-containing protein 5A (Tmco5a) from Mus musculus (Mouse).